The chain runs to 101 residues: MAKQSMKAREVKRVKLADKFFAKRAELKAIISDVNASDEDRWNAVLKLQTLPRDSSPSRQRNPCRQTGRPHGYVGKFGLSRIKLREAAMRGEVPGLKKASW.

The disordered stretch occupies residues 51-72; sequence LPRDSSPSRQRNPCRQTGRPHG. A compositionally biased stretch (polar residues) spans 52–65; sequence PRDSSPSRQRNPCR.

Belongs to the universal ribosomal protein uS14 family. In terms of assembly, part of the 30S ribosomal subunit. Contacts proteins S3 and S10.

Its function is as follows. Binds 16S rRNA, required for the assembly of 30S particles and may also be responsible for determining the conformation of the 16S rRNA at the A site. The polypeptide is Small ribosomal subunit protein uS14 (Buchnera aphidicola subsp. Acyrthosiphon kondoi (Acyrthosiphon kondoi symbiotic bacterium)).